The following is a 376-amino-acid chain: Alanine racemase (376 aa).

Lysine 40 serves as the catalytic Proton acceptor; specific for D-alanine. Residue lysine 40 is modified to N6-(pyridoxal phosphate)lysine. Residue arginine 138 coordinates substrate. The active-site Proton acceptor; specific for L-alanine is the tyrosine 270. Methionine 317 provides a ligand contact to substrate.

It belongs to the alanine racemase family. The cofactor is pyridoxal 5'-phosphate.

It carries out the reaction L-alanine = D-alanine. Its pathway is amino-acid biosynthesis; D-alanine biosynthesis; D-alanine from L-alanine: step 1/1. Its function is as follows. Catalyzes the interconversion of L-alanine and D-alanine. May also act on other amino acids. The chain is Alanine racemase (alr) from Lactobacillus gasseri (strain ATCC 33323 / DSM 20243 / BCRC 14619 / CIP 102991 / JCM 1131 / KCTC 3163 / NCIMB 11718 / NCTC 13722 / AM63).